A 212-amino-acid chain; its full sequence is ER lumen protein-retaining receptor 2 (212 aa).

Residues 1–4 are Lumenal-facing; it reads MNVF. Residues 5–24 form a helical membrane-spanning segment; sequence RLSGDLSHLAAIIILLLKIW. Over 25-32 the chain is Cytoplasmic; that stretch reads KSRSCAGI. Residues 33–52 traverse the membrane as a helical segment; the sequence is SGKSQLLFALVFTTRYLDLL. The interaction with the K-D-E-L motif on target proteins stretch occupies residues 47–48; the sequence is RY. Topologically, residues 53 to 58 are lumenal; the sequence is TSFISL. The chain crosses the membrane as a helical span at residues 59-79; it reads YNTSMKVIYIGCAYATVYLIY. Over 80-92 the chain is Cytoplasmic; that stretch reads MKFKATYDGNHDT. Residues 93-110 traverse the membrane as a helical segment; the sequence is FRVEFLVVPVGGLSVLVN. Residues 111 to 116 are Lumenal-facing; sequence HDFSPL. The helical transmembrane segment at 117 to 135 threads the bilayer; sequence EILWTFSIYLESVAILPQL. Residues 136–149 are Cytoplasmic-facing; it reads FMISKTGEAETITT. The chain crosses the membrane as a helical span at residues 150–168; it reads HYLFFLGLYRALYLFNWIW. The interaction with the K-D-E-L motif on target proteins stretch occupies residues 159-169; sequence RALYLFNWIWR. Over 169 to 178 the chain is Lumenal; the sequence is RYSFEGFFDL. A helical transmembrane segment spans residues 179-199; that stretch reads IAIVAGVVQTILYCDFFYLYV. The Cytoplasmic portion of the chain corresponds to 200-212; the sequence is TKVLKGKKLSLPA. The important for recycling of cargo proteins with the sequence motif K-D-E-L from the Golgi to the endoplasmic reticulum stretch occupies residues 204–207; that stretch reads KGKK.

This sequence belongs to the ERD2 family.

It localises to the endoplasmic reticulum membrane. The protein resides in the golgi apparatus membrane. Its subcellular location is the cytoplasmic vesicle. The protein localises to the COPI-coated vesicle membrane. Receptor for the C-terminal sequence motif K-D-E-L that is present on endoplasmic reticulum resident proteins and that mediates their recycling from the Golgi back to the endoplasmic reticulum. Binding is pH dependent, and is optimal at pH 5-5.4. This Xenopus tropicalis (Western clawed frog) protein is ER lumen protein-retaining receptor 2 (kdelr2).